A 470-amino-acid chain; its full sequence is 6-phospho-beta-galactosidase (470 aa).

D-galactose 6-phosphate is bound by residues Gln-19, His-116, Asn-159, Glu-160, and Asn-297. Glu-160 functions as the Proton donor in the catalytic mechanism. Glu-375 serves as the catalytic Nucleophile. D-galactose 6-phosphate contacts are provided by Ser-430, Trp-431, Lys-437, and Tyr-439.

The protein belongs to the glycosyl hydrolase 1 family.

The catalysed reaction is a 6-phospho-beta-D-galactoside + H2O = D-galactose 6-phosphate + an alcohol. Its pathway is carbohydrate metabolism; lactose degradation; D-galactose 6-phosphate and beta-D-glucose from lactose 6-phosphate: step 1/1. The protein is 6-phospho-beta-galactosidase of Staphylococcus epidermidis (strain ATCC 35984 / DSM 28319 / BCRC 17069 / CCUG 31568 / BM 3577 / RP62A).